Reading from the N-terminus, the 505-residue chain is MPNKAVSIYYLNFNQTGTCISMGTSNGFLIFNCAPFGKFYSEDSGGYGIVEMLFSTSLLALVGIGDQPMLSPRRLRIINTKKHSIICEVTFPTKILSVKMNRSRIVVVLKEQIYIYDINNMRLLHTIEIAPNPEGLVALSCNTDTNLLAYPSPPKVISSDINPNVNTNTINIARSKSEELIANSKDNNLQNKFGTTLEGQQNIDEDKAANGYQVDQNTDTAENDINSGDVIIYDMSTLQPLMVIEAHKGEIAALNFSFDGSLIATASEKGTIIRVFSTSSGAKLYQFRRGTYPTKIYSLSFSQDNRFLSVTCSSKTVHIFKLTKTGEERTSGGADDADSDDSGNENDGDNNSVGNGDVSSLLSDNDIESTREPYVDASRKTMGRMIRNSSQKLSRRAAKTLGQLFPIKVTSILEPSRHFASLKLPTDSNISGNVKTLCSIGNEMEVDKVEYPELFDGQDQGDRTKVTMLPIRVISSEGYLYNYVLDPERGGDCLLLSQYSTAIDQ.

2 WD repeats span residues 246–286 (AHKG…KLYQ) and 291–330 (TYPT…EERT). The short motif at 287 to 291 (FRRGT) is the L/FRRG motif element. The segment at 328 to 380 (ERTSGGADDADSDDSGNENDGDNNSVGNGDVSSLLSDNDIESTREPYVDASRK) is disordered. The span at 335 to 348 (DDADSDDSGNENDG) shows a compositional bias: acidic residues. The segment covering 349-360 (DNNSVGNGDVSS) has biased composition (low complexity). Over residues 368-379 (ESTREPYVDASR) the composition is skewed to basic and acidic residues.

Belongs to the WD repeat PROPPIN family. Component of the PI(3,5)P2 regulatory complex.

It is found in the preautophagosomal structure membrane. It localises to the vacuole membrane. The protein resides in the endosome membrane. Its function is as follows. The PI(3,5)P2 regulatory complex regulates both the synthesis and turnover of phosphatidylinositol 3,5-bisphosphate (PtdIns(3,5)P2). Necessary for proper vacuole morphology. Plays an important role in osmotically-induced vacuole fragmentation. Required for cytoplasm to vacuole transport (Cvt) vesicle formation, pexophagy and starvation-induced autophagy. Involved in correct ATG9 trafficking to the pre-autophagosomal structure. Might also be involved in premeiotic DNA replication. This chain is Autophagy-related protein 18 (ATG18), found in Candida glabrata (strain ATCC 2001 / BCRC 20586 / JCM 3761 / NBRC 0622 / NRRL Y-65 / CBS 138) (Yeast).